We begin with the raw amino-acid sequence, 662 residues long: ABC transporter G family member 25 (662 aa).

Residues 1 to 30 (MSAFDGVENQMNGPDSSPRLSQDPREPRSL) are disordered. Over residues 9 to 20 (NQMNGPDSSPRL) the composition is skewed to polar residues. N56 carries N-linked (GlcNAc...) asparagine glycosylation. In terms of domain architecture, ABC transporter spans 69-308 (QKPSDETRST…FESVGFSPAF (240 aa)). 101–108 (GPSGSGKS) lines the ATP pocket. An N-linked (GlcNAc...) asparagine glycan is attached at N122. 7 consecutive transmembrane segments (helical) span residues 374-394 (VNGG…CILL), 406-426 (FDLL…LMWW), 437-457 (LGLL…NAVF), 489-509 (LSME…MVYL), 522-542 (VLLL…AAIM), 547-567 (ASTI…YYVN), and 629-649 (VIGD…FFGY). Positions 388–594 (SQLCILLHRL…CYRLLVAIQY (207 aa)) constitute an ABC transmembrane type-2 domain.

Belongs to the ABC transporter superfamily. ABCG family. Eye pigment precursor importer (TC 3.A.1.204) subfamily. In terms of tissue distribution, mainly expressed in vascular tissues,predominantly in phloem companion cells, with highest levels in roots and seeds, and lower levels in seedlings, stems, leaves and flowers. Mostly observed in inflorescence meristems relative to cauline leaves and developing siliques. In seeds, mainly expressed in the endosperm and, to a lesser extent, in the embryo.

Its subcellular location is the cell membrane. The catalysed reaction is abscisate(in) + ATP + H2O = abscisate(out) + ADP + phosphate + H(+). ADP and vanadate (ABC transporters inhibitor) inhibit the ATP-dependent abscisic acid (ABA) uptake. High affinity abscisic acid (ABA) transporter that mediates the export of ABA, with a preference for (+)-ABA, through the plasma membrane, especially in vascular tissues (e.g. phloem companion cells), and is involved in the intercellular ABA signaling pathway. Together with ABCG31, export ABA from the endosperm to deliver it to the embryo via ABCG30 and ABCG40-mediated import to suppress radicle extension and subsequent embryonic growth. The chain is ABC transporter G family member 25 from Arabidopsis thaliana (Mouse-ear cress).